The chain runs to 121 residues: Small ribosomal subunit protein uS13 (121 aa).

The tract at residues 94–121 (GLPMRGQRTRTNARTRKGPRKAAAALKK) is disordered.

Belongs to the universal ribosomal protein uS13 family. As to quaternary structure, part of the 30S ribosomal subunit. Forms a loose heterodimer with protein S19. Forms two bridges to the 50S subunit in the 70S ribosome.

Its function is as follows. Located at the top of the head of the 30S subunit, it contacts several helices of the 16S rRNA. In the 70S ribosome it contacts the 23S rRNA (bridge B1a) and protein L5 of the 50S subunit (bridge B1b), connecting the 2 subunits; these bridges are implicated in subunit movement. Contacts the tRNAs in the A and P-sites. This is Small ribosomal subunit protein uS13 from Polaromonas sp. (strain JS666 / ATCC BAA-500).